A 205-amino-acid polypeptide reads, in one-letter code: Small ribosomal subunit protein uS4 (205 aa).

Over residues 1 to 16 the composition is skewed to basic and acidic residues; that stretch reads MSKRETTKYKIDRRMG. A disordered region spans residues 1-46; sequence MSKRETTKYKIDRRMGENIWGRPKSPVNRRDYGPGQHGQRRKGKLS. In terms of domain architecture, S4 RNA-binding spans 94 to 157; sequence SRLDAVIYRA…KQLVLVLESV (64 aa).

It belongs to the universal ribosomal protein uS4 family. Part of the 30S ribosomal subunit. Contacts protein S5. The interaction surface between S4 and S5 is involved in control of translational fidelity.

One of the primary rRNA binding proteins, it binds directly to 16S rRNA where it nucleates assembly of the body of the 30S subunit. Functionally, with S5 and S12 plays an important role in translational accuracy. In Bartonella quintana (strain Toulouse) (Rochalimaea quintana), this protein is Small ribosomal subunit protein uS4.